Here is an 88-residue protein sequence, read N- to C-terminus: Phosphocarrier protein HPr (88 aa).

The region spanning 1 to 88 (MEQQSYTIID…DVLSKEGLTE (88 aa)) is the HPr domain. Histidine 15 serves as the catalytic Pros-phosphohistidine intermediate. Serine 46 bears the Phosphoserine; by HPrK/P mark.

The protein belongs to the HPr family.

Its subcellular location is the cytoplasm. With respect to regulation, phosphorylation on Ser-46 inhibits the phosphoryl transfer from enzyme I to HPr. Functionally, general (non sugar-specific) component of the phosphoenolpyruvate-dependent sugar phosphotransferase system (sugar PTS). This major carbohydrate active-transport system catalyzes the phosphorylation of incoming sugar substrates concomitantly with their translocation across the cell membrane. The phosphoryl group from phosphoenolpyruvate (PEP) is transferred to the phosphoryl carrier protein HPr by enzyme I. Phospho-HPr then transfers it to the PTS EIIA domain. Its function is as follows. P-Ser-HPr interacts with the catabolite control protein A (CcpA), forming a complex that binds to DNA at the catabolite response elements cre, operator sites preceding a large number of catabolite-regulated genes. Thus, P-Ser-HPr is a corepressor in carbon catabolite repression (CCR), a mechanism that allows bacteria to coordinate and optimize the utilization of available carbon sources. P-Ser-HPr also plays a role in inducer exclusion, in which it probably interacts with several non-PTS permeases and inhibits their transport activity. In Staphylococcus carnosus, this protein is Phosphocarrier protein HPr (ptsH).